A 383-amino-acid polypeptide reads, in one-letter code: S-adenosylmethionine synthase (383 aa).

His-15 is a binding site for ATP. A Mg(2+)-binding site is contributed by Asp-17. Residue Glu-43 coordinates K(+). The L-methionine site is built by Glu-56 and Gln-99. A flexible loop region spans residues 99-109 (QSPDINQGVDR). ATP-binding positions include 164 to 166 (DAK), 230 to 231 (RF), Asp-239, 245 to 246 (RK), Ala-262, and Lys-266. Asp-239 provides a ligand contact to L-methionine. An L-methionine-binding site is contributed by Lys-270.

The protein belongs to the AdoMet synthase family. As to quaternary structure, homotetramer; dimer of dimers. Mg(2+) serves as cofactor. Requires K(+) as cofactor.

The protein localises to the cytoplasm. It catalyses the reaction L-methionine + ATP + H2O = S-adenosyl-L-methionine + phosphate + diphosphate. It participates in amino-acid biosynthesis; S-adenosyl-L-methionine biosynthesis; S-adenosyl-L-methionine from L-methionine: step 1/1. Catalyzes the formation of S-adenosylmethionine (AdoMet) from methionine and ATP. The overall synthetic reaction is composed of two sequential steps, AdoMet formation and the subsequent tripolyphosphate hydrolysis which occurs prior to release of AdoMet from the enzyme. In Pseudoalteromonas translucida (strain TAC 125), this protein is S-adenosylmethionine synthase.